Consider the following 188-residue polypeptide: PRA1 family protein 3 (188 aa).

Met1 is subject to N-acetylmethionine. At 1-35 the chain is on the cytoplasmic side; that stretch reads MDVNIAPLRAWDDFFPGSDRFARPDFRDISKWNNR. Helical transmembrane passes span 36–56 and 57–77; these read VVSNLLYYQTNYLVVAAMMIS and VVGFLSPFNMILGGIVVVLVF. Residues 78 to 93 lie on the Cytoplasmic side of the membrane; the sequence is TGFVWAAHNKDILRRL. 2 helical membrane-spanning segments follow: residues 94 to 114 and 115 to 135; these read KKQYPTVFVMVVMLASYFLIS and MFGGVMVFVFGITFPLLLMFI. The segment at 103–117 is required for homodimer formation and heterodimer formation with ARL6IP1; sequence MVVMLASYFLISMFG. At 136–188 the chain is on the cytoplasmic side; that stretch reads HASLRLRNLKNKLENKIEGIGLKRTPMGIVLDALEQQEENISKFADYISKVNE. Residues 136–188 are targeting to endoplasmic reticulum membrane; sequence HASLRLRNLKNKLENKIEGIGLKRTPMGIVLDALEQQEENISKFADYISKVNE.

This sequence belongs to the PRA1 family. Homodimer. Heterodimer with ARL6IP1. Forms multimers. Interacts with ARL6. Interacts with prenylated RAB1A and RAB3A. Interacts with SLC1A1/EAAC1. Interacts with RTN2 (via first transmembrane domain). Does not interact with VAMP1, VAMP2 or VAMP3.

It is found in the endoplasmic reticulum membrane. It localises to the cell membrane. The protein resides in the cytoplasm. Its subcellular location is the cytoskeleton. Regulates intracellular concentrations of taurine and glutamate. Negatively modulates SLC1A1/EAAC1 glutamate transport activity by decreasing its affinity for glutamate in a PKC activity-dependent manner. Plays a role in the retention of SLC1A1/EAAC1 in the endoplasmic reticulum. This chain is PRA1 family protein 3 (ARL6IP5), found in Sus scrofa (Pig).